Here is a 295-residue protein sequence, read N- to C-terminus: sn-glycerol-3-phosphate transport system permease protein UgpA (295 aa).

At 1–11 (MSSSRPVFRSR) the chain is on the cytoplasmic side. A helical transmembrane segment spans residues 12–32 (WLPYLLVAPQLIITVIFFIWP). Residues 33–80 (AGEALWYSLQSVDPFGFSSQFVGLDNFVALFHDSYYIDSFWTTIKFST) lie on the Periplasmic side of the membrane. The ABC transmembrane type-1 domain occupies 76-284 (IKFSTFVTVS…FLVIVLTVVQ (209 aa)). Residues 81-101 (FVTVSGLLVSLFFAALVEYIV) form a helical membrane-spanning segment. The Cytoplasmic segment spans residues 102–109 (RGSRFYQT). The chain crosses the membrane as a helical span at residues 110 to 130 (LMLLPYAVAPAVAAVLWIFLF). Residues 131–156 (NPGRGLITHFLAEFGYDWNHAQNSGQ) are Periplasmic-facing. The helical transmembrane segment at 157 to 177 (AMFLVVFASVWKQISYNFLFF) threads the bilayer. Residues 178-207 (YAALQSIPRSLIEAAAIDGVGPIRRFFKIA) lie on the Cytoplasmic side of the membrane. A helical membrane pass occupies residues 208-228 (LPLIAPVSFFLLVVNLVYAFF). Residues 229 to 262 (DTFPVIDAATSGGPVQAITTLIYKIYREGFTGLD) lie on the Periplasmic side of the membrane. A helical transmembrane segment spans residues 263 to 283 (LASSAAQSVVLMFLVIVLTVV). Residues 284–295 (QFRYVESKVRYQ) are Cytoplasmic-facing.

Belongs to the binding-protein-dependent transport system permease family. UgpAE subfamily. As to quaternary structure, the complex is composed of two ATP-binding proteins (UgpC), two transmembrane proteins (UgpA and UgpE) and a solute-binding protein (UgpB).

It localises to the cell inner membrane. In terms of biological role, part of the ABC transporter complex UgpBAEC involved in sn-glycerol-3-phosphate (G3P) import. Probably responsible for the translocation of the substrate across the membrane. In Shigella dysenteriae serotype 1 (strain Sd197), this protein is sn-glycerol-3-phosphate transport system permease protein UgpA (ugpA).